Reading from the N-terminus, the 473-residue chain is Aspartyl/glutamyl-tRNA(Asn/Gln) amidotransferase subunit B (473 aa).

Belongs to the GatB/GatE family. GatB subfamily. As to quaternary structure, heterotrimer of A, B and C subunits.

It catalyses the reaction L-glutamyl-tRNA(Gln) + L-glutamine + ATP + H2O = L-glutaminyl-tRNA(Gln) + L-glutamate + ADP + phosphate + H(+). The enzyme catalyses L-aspartyl-tRNA(Asn) + L-glutamine + ATP + H2O = L-asparaginyl-tRNA(Asn) + L-glutamate + ADP + phosphate + 2 H(+). Its function is as follows. Allows the formation of correctly charged Asn-tRNA(Asn) or Gln-tRNA(Gln) through the transamidation of misacylated Asp-tRNA(Asn) or Glu-tRNA(Gln) in organisms which lack either or both of asparaginyl-tRNA or glutaminyl-tRNA synthetases. The reaction takes place in the presence of glutamine and ATP through an activated phospho-Asp-tRNA(Asn) or phospho-Glu-tRNA(Gln). The polypeptide is Aspartyl/glutamyl-tRNA(Asn/Gln) amidotransferase subunit B (Campylobacter hominis (strain ATCC BAA-381 / DSM 21671 / CCUG 45161 / LMG 19568 / NCTC 13146 / CH001A)).